The following is a 335-amino-acid chain: tRNA N6-adenosine threonylcarbamoyltransferase (335 aa).

2 residues coordinate Fe cation: histidine 111 and histidine 115. Substrate is bound by residues 134 to 138 (LISGG), aspartate 167, glycine 180, and asparagine 270. A Fe cation-binding site is contributed by aspartate 298.

The protein belongs to the KAE1 / TsaD family. Fe(2+) serves as cofactor.

Its subcellular location is the cytoplasm. The enzyme catalyses L-threonylcarbamoyladenylate + adenosine(37) in tRNA = N(6)-L-threonylcarbamoyladenosine(37) in tRNA + AMP + H(+). Required for the formation of a threonylcarbamoyl group on adenosine at position 37 (t(6)A37) in tRNAs that read codons beginning with adenine. Is involved in the transfer of the threonylcarbamoyl moiety of threonylcarbamoyl-AMP (TC-AMP) to the N6 group of A37, together with TsaE and TsaB. TsaD likely plays a direct catalytic role in this reaction. The chain is tRNA N6-adenosine threonylcarbamoyltransferase from Nitrosococcus oceani (strain ATCC 19707 / BCRC 17464 / JCM 30415 / NCIMB 11848 / C-107).